A 65-amino-acid polypeptide reads, in one-letter code: Large ribosomal subunit protein bL35 (65 aa).

The tract at residues methionine 1 to arginine 30 is disordered. Residues alanine 10–arginine 30 show a composition bias toward basic residues.

It belongs to the bacterial ribosomal protein bL35 family.

This is Large ribosomal subunit protein bL35 from Pseudoalteromonas atlantica (strain T6c / ATCC BAA-1087).